The sequence spans 320 residues: Eukaryotic translation initiation factor 3 subunit G (320 aa).

A disordered region spans residues 1–60; the sequence is MPTGDFDSKPSWADQVEEEGEDDKCVTSELLKGIPLPTGDTSPEPELLPGDPLPPPKEVI. Residues serine 8 and serine 11 each carry the phosphoserine modification. Phosphothreonine is present on residues threonine 38 and threonine 41. Phosphoserine is present on residues serine 42, serine 189, serine 223, and serine 264. The interval 204–233 is disordered; that stretch reads QAAQSKTGKYVPPSLRDGASRRGESMQPNR. Residues 221-233 show a composition bias toward basic and acidic residues; sequence GASRRGESMQPNR. The RRM domain occupies 239–317; the sequence is ATIRVTNLSE…LILNVEWAKP (79 aa).

It belongs to the eIF-3 subunit G family. In terms of assembly, component of the eukaryotic translation initiation factor 3 (eIF-3) complex, which is composed of 13 subunits: EIF3A, EIF3B, EIF3C, EIF3D, EIF3E, EIF3F, EIF3G, EIF3H, EIF3I, EIF3J, EIF3K, EIF3L and EIF3M. The eIF-3 complex appears to include 3 stable modules: module A is composed of EIF3A, EIF3B, EIF3G and EIF3I; module B is composed of EIF3F, EIF3H, and EIF3M; and module C is composed of EIF3C, EIF3D, EIF3E, EIF3K and EIF3L. EIF3C of module C binds EIF3B of module A and EIF3H of module B, thereby linking the three modules. EIF3J is a labile subunit that binds to the eIF-3 complex via EIF3B. The eIF-3 complex may interact with RPS6KB1 under conditions of nutrient depletion. Mitogenic stimulation may lead to binding and activation of a complex composed of MTOR and RPTOR, leading to phosphorylation and release of RPS6KB1 and binding of EIF4B to eIF-3. Interacts (via C-terminus) with AIFM1 (via N-terminus). Interacts with DHX33; the interaction is independent of RNA. Phosphorylated. Phosphorylation is enhanced upon serum stimulation.

It localises to the cytoplasm. The protein localises to the nucleus. It is found in the perinuclear region. Functionally, RNA-binding component of the eukaryotic translation initiation factor 3 (eIF-3) complex, which is required for several steps in the initiation of protein synthesis. The eIF-3 complex associates with the 40S ribosome and facilitates the recruitment of eIF-1, eIF-1A, eIF-2:GTP:methionyl-tRNAi and eIF-5 to form the 43S pre-initiation complex (43S PIC). The eIF-3 complex stimulates mRNA recruitment to the 43S PIC and scanning of the mRNA for AUG recognition. The eIF-3 complex is also required for disassembly and recycling of post-termination ribosomal complexes and subsequently prevents premature joining of the 40S and 60S ribosomal subunits prior to initiation. The eIF-3 complex specifically targets and initiates translation of a subset of mRNAs involved in cell proliferation, including cell cycling, differentiation and apoptosis, and uses different modes of RNA stem-loop binding to exert either translational activation or repression. This subunit can bind 18S rRNA. In Mus musculus (Mouse), this protein is Eukaryotic translation initiation factor 3 subunit G (Eif3g).